The following is a 286-amino-acid chain: Bifunctional protein FolD (286 aa).

Residues 165–167 (GRS), S190, and V231 each bind NADP(+).

This sequence belongs to the tetrahydrofolate dehydrogenase/cyclohydrolase family. In terms of assembly, homodimer.

The enzyme catalyses (6R)-5,10-methylene-5,6,7,8-tetrahydrofolate + NADP(+) = (6R)-5,10-methenyltetrahydrofolate + NADPH. The catalysed reaction is (6R)-5,10-methenyltetrahydrofolate + H2O = (6R)-10-formyltetrahydrofolate + H(+). Its pathway is one-carbon metabolism; tetrahydrofolate interconversion. In terms of biological role, catalyzes the oxidation of 5,10-methylenetetrahydrofolate to 5,10-methenyltetrahydrofolate and then the hydrolysis of 5,10-methenyltetrahydrofolate to 10-formyltetrahydrofolate. In Bacillus anthracis (strain A0248), this protein is Bifunctional protein FolD.